The sequence spans 882 residues: Translation initiation factor IF-2 (882 aa).

Composition is skewed to polar residues over residues 38–56 (NDSNSFVDLHNNSNKAEYS), 97–124 (GGYSQNRDNRTGGYSQNRDNRTGGYSQN), and 140–192 (GGYS…NRDS). 2 disordered regions span residues 38 to 192 (NDSN…NRDS) and 236 to 274 (STPAADSENSKELNRKLGEKKKQQQESQKSYKRKKAETE). Residues 243–259 (ENSKELNRKLGEKKKQQ) show a composition bias toward basic and acidic residues. Positions 380-553 (EKPPVITIMG…DMMLLKANPS (174 aa)) constitute a tr-type G domain. Positions 389 to 396 (GHVDHGKT) are G1. A GTP-binding site is contributed by 389 to 396 (GHVDHGKT). Residues 414-418 (GITQH) are G2. The tract at residues 435 to 438 (DTPG) is G3. Residues 435-439 (DTPGH) and 489-492 (NKID) each bind GTP. Residues 489-492 (NKID) are G4. Residues 525–527 (SAL) are G5.

This sequence belongs to the TRAFAC class translation factor GTPase superfamily. Classic translation factor GTPase family. IF-2 subfamily.

Its subcellular location is the cytoplasm. Its function is as follows. One of the essential components for the initiation of protein synthesis. Protects formylmethionyl-tRNA from spontaneous hydrolysis and promotes its binding to the 30S ribosomal subunits. Also involved in the hydrolysis of GTP during the formation of the 70S ribosomal complex. This Borreliella burgdorferi (strain ATCC 35210 / DSM 4680 / CIP 102532 / B31) (Borrelia burgdorferi) protein is Translation initiation factor IF-2 (infB).